Reading from the N-terminus, the 131-residue chain is Large ribosomal subunit protein bL17 (131 aa).

It belongs to the bacterial ribosomal protein bL17 family. In terms of assembly, part of the 50S ribosomal subunit. Contacts protein L32.

The sequence is that of Large ribosomal subunit protein bL17 from Methylibium petroleiphilum (strain ATCC BAA-1232 / LMG 22953 / PM1).